Here is a 374-residue protein sequence, read N- to C-terminus: Putative heme chaperone HemW-like protein (374 aa).

The region spanning 1-231 (MKLLGLYINI…EKLLKKSGYK (231 aa)) is the Radical SAM core domain.

This sequence belongs to the anaerobic coproporphyrinogen-III oxidase family. HemW subfamily.

Its subcellular location is the cytoplasm. In terms of biological role, might be a heme chaperone; in E.coli heme binds independently of binding to [4Fe-4S] or S-adenosyl-L-methionine. The polypeptide is Putative heme chaperone HemW-like protein (Buchnera aphidicola subsp. Baizongia pistaciae (strain Bp)).